The sequence spans 419 residues: tRNA modification GTPase MnmE (419 aa).

Positions 20, 76, and 115 each coordinate (6S)-5-formyl-5,6,7,8-tetrahydrofolate. Residues 211–348 form the TrmE-type G domain; sequence GYEVAIIGPP…LLDLVYDRLR (138 aa). K(+) is bound at residue Asn221. GTP-binding positions include 221–226, 240–246, and 265–268; these read NAGKST, SEIAGTT, and DTAG. Ser225 is a binding site for Mg(2+). Residues Ser240, Ile242, and Thr245 each contribute to the K(+) site. Thr246 serves as a coordination point for Mg(2+). Position 419 (Lys419) interacts with (6S)-5-formyl-5,6,7,8-tetrahydrofolate.

Belongs to the TRAFAC class TrmE-Era-EngA-EngB-Septin-like GTPase superfamily. TrmE GTPase family. In terms of assembly, homodimer. Heterotetramer of two MnmE and two MnmG subunits. It depends on K(+) as a cofactor.

It localises to the cytoplasm. Functionally, exhibits a very high intrinsic GTPase hydrolysis rate. Involved in the addition of a carboxymethylaminomethyl (cmnm) group at the wobble position (U34) of certain tRNAs, forming tRNA-cmnm(5)s(2)U34. The protein is tRNA modification GTPase MnmE of Paracoccus denitrificans (strain Pd 1222).